Reading from the N-terminus, the 1422-residue chain is FH1/FH2 domain-containing protein 3 (1422 aa).

Residues 18-411 form the GBD/FH3 domain; that stretch reads NSTNFPEPSR…NFGNNSYHSS (394 aa). Disordered regions lie at residues 323–464, 521–666, 687–708, 754–781, 821–849, 1262–1305, 1320–1357, and 1374–1410; these read RHED…RRRQ, ACLA…GVNG, RKSP…QEAE, SGDL…VQPK, LGHR…PPLL, QQKQ…SYAE, SSPS…SPNV, and TQVP…EEAR. Ser-345 carries the phosphoserine modification. The span at 357 to 366 shows a compositional bias: basic residues; that stretch reads LDRRRSRRHS. Over residues 367–390 the composition is skewed to polar residues; it reads VQSIKSTLSAPTSPCSQSAPSFKP. Ser-375 carries the phosphoserine modification. Residues 410–430 are compositionally biased toward low complexity; that stretch reads SSRPSSGSSVPTTPTSSVSPP. Positions 438 to 449 are enriched in polar residues; that stretch reads SSPSGLLTSSFR. Residues 448–480 adopt a coiled-coil conformation; the sequence is FRQHQESLAAERERRRQEREERLQRIEREERNK. Over residues 450 to 464 the composition is skewed to basic and acidic residues; the sequence is QHQESLAAERERRRQ. Positions 521–535 are enriched in low complexity; it reads ACLAPLSHSPSSSDS. Positions 536-547 are enriched in polar residues; that stretch reads QEALTVSASSPG. Acidic residues-rich tracts occupy residues 559-569 and 592-603; these read PEPESEAEPEA and ETEVEQALEQEP. A compositionally biased stretch (basic and acidic residues) spans 604-624; sequence EERASLSEKERQNEGVNERDN. Over residues 626 to 635 the composition is skewed to low complexity; sequence SASSVSSSSS. The segment covering 637 to 651 has biased composition (basic and acidic residues); the sequence is LEREEKEDKLSRDRT. Ser-763 carries the phosphoserine modification. Thr-775 carries the phosphothreonine modification. A compositionally biased stretch (pro residues) spans 827 to 849; sequence PGPPPPPPPTFLGLPPPPPPPLL. Residues 827-858 form the FH1 domain; the sequence is PGPPPPPPPTFLGLPPPPPPPLLDSIPPPPVP. The FH2 domain occupies 883–1279; sequence GQPTFTKKKK…HRERNKTRGK (397 aa). A compositionally biased stretch (basic residues) spans 1264 to 1278; that stretch reads KQKRANHRERNKTRG. The 33-residue stretch at 1359–1391 folds into the DAD domain; the sequence is DDAADEIMDRIVKSATQVPSQRVVPRERKRSRA. The span at 1385-1400 shows a compositional bias: basic residues; sequence ERKRSRANRKSLRRTL.

The protein belongs to the formin homology family. In terms of assembly, interacts with nestin/NES-based interfilament (IF). Interacts with SQSTM1; isoform 4 threonine phosphorylation disrupts SQSTM1-binding. In terms of processing, phosphorylated on Thr-1474 and Thr-1476 by CK2. Expressed in the heart, kidney and brain. May be down-regulated in various types of heart diseases, including idiopathic dilated, ventricular dilated, familial dilated and perinatal dilated cardiomyopathies, as well as ischemic heart disease (at protein level).

Its subcellular location is the cytoplasm. The protein localises to the cytoskeleton. It localises to the myofibril. The protein resides in the sarcomere. It is found in the z line. Actin-organizing protein that may cause stress fiber formation together with cell elongation. Isoform 4 may play a role in actin filament polymerization in cardiomyocytes. This chain is FH1/FH2 domain-containing protein 3 (FHOD3), found in Homo sapiens (Human).